We begin with the raw amino-acid sequence, 490 residues long: Aspartyl/glutamyl-tRNA(Asn/Gln) amidotransferase subunit B (490 aa).

The protein belongs to the GatB/GatE family. GatB subfamily. Heterotrimer of A, B and C subunits.

It catalyses the reaction L-glutamyl-tRNA(Gln) + L-glutamine + ATP + H2O = L-glutaminyl-tRNA(Gln) + L-glutamate + ADP + phosphate + H(+). It carries out the reaction L-aspartyl-tRNA(Asn) + L-glutamine + ATP + H2O = L-asparaginyl-tRNA(Asn) + L-glutamate + ADP + phosphate + 2 H(+). Its function is as follows. Allows the formation of correctly charged Asn-tRNA(Asn) or Gln-tRNA(Gln) through the transamidation of misacylated Asp-tRNA(Asn) or Glu-tRNA(Gln) in organisms which lack either or both of asparaginyl-tRNA or glutaminyl-tRNA synthetases. The reaction takes place in the presence of glutamine and ATP through an activated phospho-Asp-tRNA(Asn) or phospho-Glu-tRNA(Gln). The protein is Aspartyl/glutamyl-tRNA(Asn/Gln) amidotransferase subunit B of Methylorubrum populi (strain ATCC BAA-705 / NCIMB 13946 / BJ001) (Methylobacterium populi).